A 5206-amino-acid polypeptide reads, in one-letter code: MGKPFWRSVEYFFTGNYSADDGNNSIVAIGFGGEIHAYGGDDHVTVGSIGATVYTGSGNDTVVGGSAYLRVEDTTGHLSVKGAAGYADINKSGDGNVSFAGAAGGVSIDHLGNNGDVSYGGAAAYNGITRKGLSGNVTFKGAGGYNALWHETNQGNLSFAGAGAGNKLDRTWFNRYQGSRGDVTFDGAGAANSISSRVETGNITFRGAGADNHLVRKGKVGDITLQGAGASNRIERTRQAEDVYAQTRGNIRFEGVGGYNSLYSDVAHGDIHFSGGGAYNTITRKGSGSSFDAQGMEYAKAEDIVLTAAQMHGLSIDNGNKFHAVTAVKSEREPNTYLFAIADGTYTKINKVRLYNDPETGKLKYYSEAWFKRGNHLAELARSDVSSAGGFEVNPINGGYTLANIAVEHQQSVTVHAVEKNLTEYEWVTYANGTLIDAKDVALSEAKMGGHAISTDGTTVDVQAVKSNRKPNTYVYAKVLGPYTKIVVVELANDPKTGALKYQARSWYKEGDHTANLANEDISSANGYHSMGKGGYSLSDLHYSVNAVRSTSETVADIDEYTDQTLFKPATDSGESSGDVRFNGAGGGNVIKSNVTRGNVYFNGGGIANVILHSSQFGNTEFNGGGAANVIVKSGEEGDLTFRGAGLANVLVHQSKQGKMDVYAGGAVNVLVRIGDGQYLAHLLAYGNISVHKGNGNSRVVMLGGYNTHTQIGSGNGLWLAAGGFNVMTQVGKGDVASVLAGGANVLTKVGDGDLTAGMLGGANVITHISGDNETSNTTAVALGGANILTKKGKGNTLAVMGGGANVLTHVGDGTTTGVMVGGANILTKVGNGDTTGIMLGVGNVLTHVGDGQTLGVMGAAGNIFTKVGDGTSIAVMIGAGNIFTHVGEGNAWALMGGLGNVFTKVGNGDALALMVAEANVFTHIGDGMSVALMLAKGNVATKVGNGTTLAAMVGNANIFTHVGSGSTFAAMIGQANIMTKVGNDLTAALMVGKANIYTHVGDGTSLGIFAGEVNVMTKIGNGTTLAAMFGKANIMTHVGDGLTGVLALGEANIVTKVGDDFMGVVAAAKANVVTHVGDATTAAVLAGKGNILTKVGEGTTVGLLISDIGNVMTHVGDGTTIGIAKGKANIITKVGDGLGVNVAWGQANVFTQVGDGDRYNFAKGEANIITKVGDGKEVSVVQGKANIITHVGNGDDYTGAWGKANVITKVGNGRNVVLAKGEANIVTQVGDGDSFNALWSKGNIVTKVGDGMQVTAAKGKANITTTVGDGLSVTAAYGDANINTKVGDGVSVNVAWGKYNINTKVGDGLNVAVMKGKANANIHVGDGLNINASYAQNNVAIKVGNGDFYSLAVASSNTSSNKLSALFDNIKQTLLGVGGSQAINYLVQGDEASSSGTQKGRGAIATPEITKLDGFQMEAIEEVGSDLGDSLTGSVTKVDTPDLNKMQNALDVDGSSDQTQAPNLIVNGDFEQGDRGWKSTHGVEASYSGNVYGVNGEGHGARVTELDTYTNTSLYQDLTDLTEGEVIAVSFDFAKRAGLSNNEGIEVLWNGEVVFSSSGDASAWQQKTLKLTAHAGSNRIEFKGTGHNDGLGYILDNVVAKSESSQQANAVSEHATQNQASQNALSDKERAEADRQRLEQEKQKQLDAVAGSQSQLESTDQQALGNNGQAQRDAVKEESEAVTAELTKLAQGLDVLDGQATHTGESGDQWRNDFAGGLLDGVQSQLDDAKQLANDKIAAAKQTQSDNNSKVKESVAKSEAGVAQGEQNRAGAEQDIAEAKADAETRKADAVAKSNDAKQAESDAHSAANDAQSRGDRDAMNAENKANQAQNDAKGTKQNEGDRPDREGVAGSGLSGNAHSVEGAGETGSHITTDSQTNADGRFSEGLSEQEQEALEGATNAVNRLQINAGIRGKNSGSTITSMFTETNSDSIVVPTTASQDVVRKEIRISGVNLEGLGEASHDSAESLVAARAEKVANLYRWLDTDNDVATDKYVPVPGFERVDVDVSDEVKQRMIQSMSGYIEHTDNQVPKDQAEALATLFVESTLDYDWDKRVEFLTKLESYGYSFEAPHAEKSIVSFWSGKNFKQYRDILDNAQTDGKKVVYDIDVKGNAFAIDLNKHLMRWGGLFLDPDNAEQNQLKSSIDAATFSNTGFWSSVYATGAQNDVYVIAEGGVRLGNYFWNVELPALRQLQREGLVGEIRLLDKPVSEYKDLPADQIGRRLTDAGVAVKVRFDALSHERQAELLADNPDGYKADTLVELDVKLSAIDSMLRESLPFYSLRTERNLLVQEGEEGFEVRSWPGIDGKSKTILLDNPEDAAQQKSIERFILANFDNFEQMPDELFLVDNKVLSHHDGRTRIIAQKEDGAWTYNTNVELMSVTELLDAAHVNGKVRGDSYQQVIDALTEYHASTVEHADYELESVEKLLNLRKQIEGYVLGHPDSGRVEAMNSLLNQVNSRLEEVSVLAVSEQSIKAHDSFSRLYDQLDNANLKESKHLYLDGNGDFVTKGKGNLATIDQLGGSDAVLEKVKAAVTHEYGQVVADTIFARLSANDLAKDGKGIDIAGLNKVHQAIEQHMSPVSATMYIWKPSDHSTLGHAALQIGQGRTQLEGQAAADFNKQNYVSWWPLGSKSSNIRNIFNVATEDQPDLKLRWSDFSQPAHQNDTLEHDMASEENDGFGLKDGETKLKRFIEKLNAAKGIDASYKDASEGYASVLLGNPDMLASTGIPAHVFQPFVDQWNDTSYDMMDVANRFAEELQKQAQASGDPALVEKRIDNVVRLFAERALEEIEAFKASQADEGRVFRINLEGLDVAAMQAEWNRLSNDPDARYQLLTKNCSSTVAKVLKAGGADKLIGHTWRPKFGVWTPTELFNFGQALQEAQLEIAAKKQSHQVTDVLDALSGNEKHKENVTIENDGTPPRDKESLSPLTRFLNNELYGEKDARRKIGEITQTLLDHAVENGESQKVTLKGEAGRLTGYYHQGAASSEGETSATSGKVVLFLHGSGSSAEEQASAIRNHYQKQGIDMLAVNLRGYGESDGGPSEKGLYQDARTMFNYLVNDKGIDPSNIIIHGYSMGGPIAADLARYAAQNGQAVSGLLLDRPMPSMTKAITAHEMANPAGIVGAIAKAVNGQFSVEKNLKGLPKETPILLLTDNEGLGEEGEKLRAKLAIAGYNVTGEQTFYGHEASNRLMGQYADQIVSGLFNAEQAAVEAGEVLKGLEKDFKRYGDALKPDTSVPGKSKDIRTTKDFLNGYKNDHAKEIVDGFRSDMSIKQLVDLFVKGNWSAEQKGALAWEIESRALKVTFQNKSEKYNRLFREIASAGVVDAKATEQLAPQLMLLNLSNDGFGGRCDPLSKLVLVAKQLENDGQVGVARQLLEKMYSAAAVLSNPTLYSDSEKANASKLLSSLAAIHAKNPMHDTSMKVWQEKLEGKQALTVNGVVEKITDASANGKPVLLELDAPGHAMAAWAKDSGDDRVYGFYDPNAGIVEFSSAEKFGDYLTRFFGKSDLDMAQSYKLGKNDAGEAIFNRVVVMDGNTLASYKPTFGDKTTMQGILDLPVFDATPIKKPTGGVASDLEALGDKTKVVVDLAQIFTVQELKERAKVFAKPIGASYQGILDQLDLVHQAKGRDQIAASFELNKKINDYIAEHPTSGRNQALTQLKEQVTSALFIGKMQVAQAGIDAIAQTRPELAARIFMVAIEEANGKHVGLTDMMVRWANEDPYLAPKHGYKGETPSDLGFDAKYHVDLGEHYADFKQWLETSQSNGLLSKATLDESTKTVHLGYSYQELQDLTGAESVQMAFYFLKEAAKKADPISGDSAEMILLKKFADQSYLSQLDSDRMDQIEGIYRSSHETDIDAWDRRYSGTGYDELTNKLASATGVDEQLAVLLDDRKGLLIGEVHGSDVNGLRFVNEQMDALKKQGVTVIGLEHLRSDLAQPLIDRYLATGVMSSELSAMLKTKHLDVTLFENARANGIRIVALDANSSARPNVQGTEHGLMYRAGAANNIAVEVLQNLPDGEKFVAIYGKAHLQSHKGIEGFVPGITHRLDLPALKVSDSNQFTVEQDDVSLRVVYDDVANKPKITFKDSLSGANTALHNQNVNDWERVVVTPTADGGESRFDGQIIVQMENDDVVAKAAANLAGKHPESSVVVQIDSDGNYRVVYGDPSKLDGKLRWQLVGHGRDDSESNNTRLSGYSADELAVKLAKFQQSFNQAENINNKPDHISIVGCSLVSDDKQKGFGHQFINAMDANGLRVDVSVRSSELAVDEAGRKHTKDANGDWVQKAENNKVSLSWDEQGEVVAKDERIRNGIAEGDIDLSRIGVSDVDEPARGAIGDNNDVFDAPEKRKAETETSSSSANNKLSYSGNIQVNVGDGEFTAVNWGTSNVGIKVGTGGFKSLAFGDNNVMVHIGNGESKHSFDIGGYQALEGAQMFIGNRNVSFNLGRSNDLIVMMDKSIPTPPLVNPFDGAARISGVLQSIATSGEGQDWLAAQEQQWTLSGAKKFVKDMSGLDQSSSVDYTSLVELDSQNERSSRGLKHDAEAALNKQYNQWLSGNSDSDTSKLSRADKLRQANEKLAFNFAVGGQGADIQVTTGNWNFMFGDNIQSILDTNLGSLFGLMTQQFSATGQAKTTFTYTPEDLPRQLKNKLLGQLAGVGAETTLADIFGVDYTASGQIVSRNGEAVDGVAILKEMLEVIGEFSGDQLQAFVDPAKLLDSLKSGINMGADGIKSFAETHGLKEKAPEEEEDNSSVSVNGASVNSAQGATVADGSTETAETPDRAFGFNSLNLPNLFATIFSQDKQKEMKSLVENLKENLTADLLNMKEKTFDFLRNSGHLQGDGDINISLGNYNFNWGGDGKDLGAYLGDNNNFWGGRGDDVFYATGTSNIFTGGEGNDMGVLMGRENMMFGGDGNDTAVVAGRINHVFLGAGDDQSFVFGEGGEIDTGSGRDYVVTSGNFNRVDTGDDQDYSVTIGNNNQVELGAGNDFANVFGNYNRINASAGNDVVKLMGYHAVLNGGEGEDHLIAAAISKFSQFNGGEGRDLMVLGGYQNTFKGGTDVDSFVVSGDVIDNLVEDIRSEDNIVFNGIDWQKLWFERSGYDLKLSILRDPASDSDQAKFEHIGSVTFSDYFNGNRAQVIIAMGEKDATGEREYTTLSESAIDALVQAMSGFDPQAGDNGFMDNLDSKSRVAITTAWADVVHKKGITV.

The signal sequence occupies residues Met-1–Ala-19. RtxA repeat units lie at residues Gly-101–Ser-118, Gly-121–Thr-138, Gly-141–Leu-157, Gly-161–Thr-184, Gly-187–Thr-204, Gly-207–Thr-224, Gly-255–His-272, Gly-275–Phe-291, Gly-584–Tyr-601, Gly-604–Thr-620, Gly-624–Thr-641, Gly-644–Gly-658, Ala-741–Gly-753, Met-759–Gly-771, Ala-782–Leu-798, Met-801–Thr-816, Met-820–Thr-835, Gly-841–Leu-855, Met-858–Ala-875, Met-877–Asn-891, Met-896–Asp-910, Met-915–Ala-932, Met-934–Leu-950, Met-972–Asn-984, Met-991–Ser-1006, Gly-1031–Leu-1043, Ala-1067–Asp-1079, Ala-1087–Val-1102, Gly-1110–Ile-1122, Ala-1125–Asn-1142, Trp-1145–Arg-1159, Ala-1163–Val-1179, Gly-1184–Thr-1199, Ala-1201–Val-1217, Ala-1220–Phe-1236, Lys-1242–Thr-1256, Ala-1258–Thr-1275, Ala-1296–Ala-1313, and Met-1315–Asn-1332. A compositionally biased stretch (polar residues) spans Ser-1606–Leu-1626. Disordered regions lie at residues Ser-1606 to Ala-1682 and Ile-1738 to Ala-1895. Residues Ser-1627–Gln-1646 show a composition bias toward basic and acidic residues. Residues Gly-1652 to Ala-1671 show a composition bias toward polar residues. Basic and acidic residues predominate over residues Ala-1778–Ala-1805. Residues Asn-1825–Ala-1834 are compositionally biased toward polar residues. Residues Lys-1835–Gly-1849 show a composition bias toward basic and acidic residues. Positions Ser-1870–Ala-1880 are enriched in polar residues. A membrane localization region (MLD) region spans residues Glu-2377–Leu-2461. The tract at residues Glu-2537–Leu-2901 is rho inactivation domain (RID). An ABH effector region region spans residues Val-2998–Ala-3113. A Peptidase C80 domain is found at Pro-4111–Trp-4295. Residues Glu-4117–Arg-4119, Lys-4144–His-4145, and Arg-4175 contribute to the 1D-myo-inositol hexakisphosphate site. His-4181 (for cysteine protease activity) is an active-site residue. A 1D-myo-inositol hexakisphosphate-binding site is contributed by Ser-4226. Cys-4230 acts as the Nucleophile; for cysteine protease activity in catalysis. 1D-myo-inositol hexakisphosphate contacts are provided by residues Ser-4259–Arg-4261, Arg-4272–Lys-4273, Lys-4285, and Lys-4290. Disordered regions lie at residues Gly-4333–Lys-4362 and Leu-4738–Asp-4779. A compositionally biased stretch (low complexity) spans Ser-4750–Ala-4762.

Requires Mg(2+) as cofactor.

It is found in the secreted. The protein resides in the host cytoplasm. The protein localises to the host cytosol. It localises to the host cell membrane. The enzyme catalyses L-lysyl-/S-(2E,6E,10E)-geranylgeranyl-L-cysteinyl-[protein] + hexadecanoyl-CoA = N(6)-hexadecanoyl-L-lysyl-/S-(2E,6E,10E)-geranylgeranyl-L-cysteinyl-[protein] + CoA + H(+). It carries out the reaction L-lysyl-/S-(2E,6E,10E)-geranylgeranyl-L-cysteinyl-[protein] + dodecanoyl-CoA = N(6)-dodecanoyl-L-lysyl-/S-(2E,6E,10E)-geranylgeranyl-L-cysteinyl-[protein] + CoA + H(+). It catalyses the reaction L-lysyl-/S-(2E,6E,10E)-geranylgeranyl-L-cysteinyl-[protein] + decanoyl-CoA = N(6)-decanoyl-L-lysyl-/S-(2E,6E,10E)-geranylgeranyl-L-cysteinyl-[protein] + CoA + H(+). Its function is as follows. Precursor of a multifunctional toxin that causes destruction of the actin cytoskeleton by covalent cross-linking of actin and inactivation of Rho GTPases when translocated into the host cytoplasm. Upon translocation into the host cell, undergoes autoprocessing in cis mediated by the peptidase C80 domain (also named CPD domain): the protease activity is activated upon binding inositol hexakisphosphate (InsP6) present at the host cell membrane and delivers the Cysteine protease domain-containing toxin F3 chain to the host cytosol. The Cysteine protease domain-containing toxin F3 chain will then further cleave and release effector toxin chains that cause disassembly of the actin cytoskeleton and enhance V.vulnificus colonization of the small intestine, possibly by facilitating evasion of phagocytic cells. Functionally, following autocatalytic cleavage in cis, this chain mediates processing in trans to release other individual toxin chains to the host cytosol. Released effector toxin chains cause disassembly of the actin cytoskeleton and enhance V.vulnificus colonization of the small intestine, possibly by facilitating evasion of phagocytic cells. Actin-directed toxin that catalyzes the covalent cross-linking of host cytoplasmic monomeric actin. Mediates the cross-link between 'Lys-50' of one monomer and 'Glu-270' of another actin monomer, resulting in formation of highly toxic actin oligomers that cause cell rounding. The toxin can be highly efficient at very low concentrations by acting on formin homology family proteins: toxic actin oligomers bind with high affinity to formins and adversely affect both nucleation and elongation abilities of formins, causing their potent inhibition in both profilin-dependent and independent manners. Acts as an acid--amino-acid ligase that transfers the gamma-phosphoryl group of ATP to the 'Glu-270' actin residue, resulting in the formation of an activated acyl phosphate intermediate. This intermediate is further hydrolyzed and the energy of hydrolysis is utilized for the formation of the amide bond between actin subunits. In terms of biological role, N-epsilon-fatty acyltransferase that mediates lysine-palmitoylation of host Rho GTPase proteins, with a strong preference for host Rac1. After delivery to the host cytosol, localizes to the host cell membrane where it palmitoylates host Rho GTPase proteins, resulting in loss of all active GTP-bound Rho and subsequent actin depolymerization. Prenylation of host Rac1 at the C-terminus is required for lysine-palmitoylation. Its function is as follows. Indirectly activates the small GTPase CDC42. In Vibrio vulnificus, this protein is Multifunctional-autoprocessing repeats-in-toxin.